The chain runs to 179 residues: Large ribosomal subunit protein uL5 (179 aa).

This sequence belongs to the universal ribosomal protein uL5 family. Part of the 50S ribosomal subunit; part of the 5S rRNA/L5/L18/L25 subcomplex. Contacts the 5S rRNA and the P site tRNA. Forms a bridge to the 30S subunit in the 70S ribosome.

In terms of biological role, this is one of the proteins that bind and probably mediate the attachment of the 5S RNA into the large ribosomal subunit, where it forms part of the central protuberance. In the 70S ribosome it contacts protein S13 of the 30S subunit (bridge B1b), connecting the 2 subunits; this bridge is implicated in subunit movement. Contacts the P site tRNA; the 5S rRNA and some of its associated proteins might help stabilize positioning of ribosome-bound tRNAs. The chain is Large ribosomal subunit protein uL5 from Idiomarina loihiensis (strain ATCC BAA-735 / DSM 15497 / L2-TR).